A 501-amino-acid chain; its full sequence is Protein anon-37Cs (501 aa).

It localises to the cytoplasm. Its function is as follows. Has a non-vital function. The sequence is that of Protein anon-37Cs (anon-37Cs) from Drosophila simulans (Fruit fly).